Here is a 346-residue protein sequence, read N- to C-terminus: Dihydroorotate dehydrogenase (quinone) (346 aa).

Residues 62-66 (AGMDK) and T86 each bind FMN. Residue K66 coordinates substrate. 111–115 (NRMGF) serves as a coordination point for substrate. The FMN site is built by N142 and N175. N175 serves as a coordination point for substrate. S178 (nucleophile) is an active-site residue. Residue N180 coordinates substrate. Residues K211 and V239 each contribute to the FMN site. 240–241 (NT) contacts substrate. FMN contacts are provided by residues G261, G289, and 310–311 (YT).

Belongs to the dihydroorotate dehydrogenase family. Type 2 subfamily. In terms of assembly, monomer. FMN is required as a cofactor.

The protein resides in the cell membrane. It catalyses the reaction (S)-dihydroorotate + a quinone = orotate + a quinol. The protein operates within pyrimidine metabolism; UMP biosynthesis via de novo pathway; orotate from (S)-dihydroorotate (quinone route): step 1/1. Catalyzes the conversion of dihydroorotate to orotate with quinone as electron acceptor. This Thermus thermophilus (strain ATCC 27634 / DSM 579 / HB8) protein is Dihydroorotate dehydrogenase (quinone).